A 595-amino-acid polypeptide reads, in one-letter code: MEKLSTAASLFGVVVAATALAMAVVGGEAAVVEQTFMVHEMNVTHLCNTTKIYVVNGRFPGPTVDVTEGDTVVVHVINRLPHGLTIHWHGVRQMRSCWADGAGYVTECPIHPGGEKTYRFNVTGQVGTLWWHAHVTCLRATINGAFIIRPRDGKYPFPTPAKDVPIIIGEWWELDLIELDRRMLDGNFDDNPLSATINGKLGDLSNCSGTVEESFVLDVKRGESYLLRVINTALFSEYYFKVAGHTFTVVGADGNYLTPYKTDMVTVAPGEAIDVLMFADAPPAYYHMVALANQPPPPDLQIPQLTSRGLVRYTGAAMDSNNLPMPMPVMPDQHNTMPSYYFRRNLTGLALPEQQQRHRVPAHVDERLLITLGLGSICRGGNTTTCKRGRSPETVVVATMNNVSFHHTNATALLEHYYDGTPEGVYTEDFPVRPPRPFNYTDRELIPAGPLEAALEPTAKAMRLRRFRYNASVEIVFQSTTLLQSDSNPMHLHGYDVFVLAQGLGNFDPKRDVEKFNYHNPQLRNTVQVPRGGWAAVRFLTDNPGMWYLHCHFEFHIIMGMATAFIVEDGPTPETSLPPPPPEFKRCGTNGLSQP.

The N-terminal stretch at 1 to 29 (MEKLSTAASLFGVVVAATALAMAVVGGEA) is a signal peptide. Plastocyanin-like domains lie at 37–153 (MVHE…PRDG) and 162–316 (KDVP…YTGA). N-linked (GlcNAc...) asparagine glycans are attached at residues asparagine 42 and asparagine 48. The Cu cation site is built by histidine 87 and histidine 89. A glycan (N-linked (GlcNAc...) asparagine) is linked at asparagine 121. Histidine 132 and histidine 134 together coordinate Cu cation. N-linked (GlcNAc...) asparagine glycans are attached at residues asparagine 206, asparagine 345, asparagine 382, asparagine 402, asparagine 409, asparagine 439, and asparagine 470. Positions 429–571 (DFPVRPPRPF…ATAFIVEDGP (143 aa)) constitute a Plastocyanin-like 3 domain. Cu cation contacts are provided by asparagine 488, histidine 491, histidine 493, histidine 550, cysteine 551, histidine 552, histidine 556, and methionine 561. Residues 570 to 595 (GPTPETSLPPPPPEFKRCGTNGLSQP) are disordered.

Belongs to the multicopper oxidase family. Cu cation serves as cofactor.

The protein localises to the secreted. It is found in the extracellular space. It localises to the apoplast. It catalyses the reaction 4 hydroquinone + O2 = 4 benzosemiquinone + 2 H2O. Lignin degradation and detoxification of lignin-derived products. The polypeptide is Putative laccase-18 (LAC18) (Oryza sativa subsp. indica (Rice)).